Here is a 381-residue protein sequence, read N- to C-terminus: tRNA (guanine(6)-N2)-methyltransferase (381 aa).

The THUMP domain maps to 43–157 (KLIPKINYLS…FDELIVGIDT (115 aa)). S-adenosyl-L-methionine-binding positions include 173-177 (HPAHL), 204-206 (SGT), Asp-261, 289-290 (DA), and Asn-306.

It belongs to the methyltransferase superfamily.

Its subcellular location is the cytoplasm. The enzyme catalyses guanosine(6) in tRNA + S-adenosyl-L-methionine = N(2)-methylguanosine(6) in tRNA + S-adenosyl-L-homocysteine + H(+). In terms of biological role, S-adenosyl-L-methionine-dependent methyltransferase that catalyzes the methylation of the guanosine nucleotide at position 6 (m2G6) in tRNA(Cys). The sequence is that of tRNA (guanine(6)-N2)-methyltransferase from Methanocaldococcus jannaschii (strain ATCC 43067 / DSM 2661 / JAL-1 / JCM 10045 / NBRC 100440) (Methanococcus jannaschii).